We begin with the raw amino-acid sequence, 181 residues long: S-fimbrial protein subunit SfaA (181 aa).

The N-terminal stretch at 1–24 (MKLKFISMAVFSALTLGVATNASA) is a signal peptide. Cys44 and Cys84 are oxidised to a cystine.

The protein belongs to the fimbrial protein family.

The protein localises to the fimbrium. Its function is as follows. Fimbriae (also called pili), polar filaments radiating from the surface of the bacterium to a length of 0.5-1.5 micrometers and numbering 100-300 per cell, enable bacteria to colonize the epithelium of specific host organs. The major fimbrial subunit. Interacts with alpha-sialic acid-(2-3)-beta-Gal containing receptors. It belongs to the group of Mrh (Mannose-resistant hemagglutination) fimbrial proteins. This is S-fimbrial protein subunit SfaA (sfaA) from Escherichia coli O6:K15:H31 (strain 536 / UPEC).